Here is a 90-residue protein sequence, read N- to C-terminus: UPF0237 protein BL1209.1 (90 aa).

The region spanning 5-79 (IITVVGQDTV…DDIGVRIRCQ (75 aa)) is the ACT domain.

It belongs to the UPF0237 family.

The polypeptide is UPF0237 protein BL1209.1 (Bifidobacterium longum (strain NCC 2705)).